Here is a 206-residue protein sequence, read N- to C-terminus: MLVLIPFKPVNPKTRLSKVMRKNERENFARCMLLDVLDALSSFDCDIKIISTHPFKIESYDVVVDSRELDDAINSRIEGETAVIMSDIPLINSRILRRFFESEGDVVIAPGRKGGTNMIIIRDRKFKVRYYYCSFLRHLEFAKSLDLKCTVFDSFYASVDIDTPDDLLELMIHGEGKKSYEFLYSIGFRIKYEKEPKLVRISNTFP.

Belongs to the CofC family. Homodimer.

The catalysed reaction is (2S)-2-phospholactate + GTP + H(+) = (2S)-lactyl-2-diphospho-5'-guanosine + diphosphate. It participates in cofactor biosynthesis; coenzyme F420 biosynthesis. Functionally, guanylyltransferase that catalyzes the activation of (2S)-2-phospholactate (2-PL) as (2S)-lactyl-2-diphospho-5'-guanosine, via the condensation of 2-PL with GTP. It is involved in the biosynthesis of coenzyme F420, a hydride carrier cofactor. The sequence is that of 2-phospho-L-lactate guanylyltransferase from Archaeoglobus profundus (strain DSM 5631 / JCM 9629 / NBRC 100127 / Av18).